Consider the following 610-residue polypeptide: Zinc metalloproteinase-disintegrin-like VAP1 (610 aa).

An N-terminal signal peptide occupies residues 1 to 20 (MIQVLLVTISLAVFPYQGSS). Positions 21 to 189 (VILESGNVND…KKASQSNLTP (169 aa)) are excised as a propeptide. At Glu-190 the chain carries Pyrrolidone carboxylic acid (Glu). The 197-residue stretch at 199–395 (KYVKLFLVAD…NMPQCILKKP (197 aa)) folds into the Peptidase M12B domain. A glycan (N-linked (GlcNAc...) asparagine) is linked at Asn-218. Intrachain disulfides connect Cys-310/Cys-390, Cys-350/Cys-374, and Cys-352/Cys-357. His-335 serves as a coordination point for Zn(2+). A Metal-binding motif is present at residues 335 to 346 (HEMGHNLGMDHD). Residue Glu-336 is the Proton acceptor of the active site. Zn(2+) contacts are provided by His-339 and His-345. In terms of domain architecture, Disintegrin spans 403–488 (PAVCGNYFVE…AECTDRFQRN (86 aa)). Residues Val-405, Asn-408, Phe-410, Glu-412, Glu-415, and Asp-418 each contribute to the Ca(2+) site. Cystine bridges form between Cys-406-Cys-435, Cys-417-Cys-430, Cys-419-Cys-425, Cys-429-Cys-452, Cys-443-Cys-449, Cys-448-Cys-474, Cys-461-Cys-481, Cys-468-Cys-499, Cys-492-Cys-504, Cys-511-Cys-561, Cys-526-Cys-572, Cys-539-Cys-549, Cys-556-Cys-598, and Cys-592-Cys-603. Positions 467–469 (ECD) match the D/ECD-tripeptide motif. Ca(2+)-binding residues include Asp-469, Met-470, Asp-472, Asp-483, and Arg-484.

Belongs to the venom metalloproteinase (M12B) family. P-III subfamily. P-IIIc sub-subfamily. In terms of assembly, homodimer; disulfide-linked. The cofactor is Zn(2+). The N-terminus is blocked. Expressed by the venom gland.

It is found in the secreted. Inhibited by EDTA and EGTA, but not by PMSF. Its function is as follows. Zinc metalloprotease that has fibrinogenolytic and hemorrhagic activities. It induces apoptosis in vascular endothelial cells (VEC), without degrading extracellular matrix (it cannot cleave collagen) or inhibiting adhesion of VEC. VAP1-induced apoptosis is inhibited by antibodies for integrin alpha-3, alpha-6, beta-1 and CD9. Apoptosis is accompanied by severe cell fragmentation, which is controlled by caspases. The protein is Zinc metalloproteinase-disintegrin-like VAP1 of Crotalus atrox (Western diamondback rattlesnake).